We begin with the raw amino-acid sequence, 1164 residues long: DNA-directed RNA polymerase 132 kDa polypeptide (1164 aa).

It belongs to the RNA polymerase beta chain family. In terms of assembly, the DNA-dependent RNA polymerase used for intermediate and late genes expression consists of eight subunits (147) kDa, (133) kDa, (35) kDa, (30) kDa, (22) kDa, (19) kDa, (18) kDa and (7) kDa totalling more than 500 kDa in mass. The same holoenzyme, with the addition of the transcription-specificity factor RAP94, is used for early gene expression.

It localises to the virion. The enzyme catalyses RNA(n) + a ribonucleoside 5'-triphosphate = RNA(n+1) + diphosphate. Part of the DNA-dependent RNA polymerase which catalyzes the transcription of viral DNA into RNA using the four ribonucleoside triphosphates as substrates. Responsible for the transcription of early, intermediate and late genes. DNA-dependent RNA polymerase associates with the early transcription factor (ETF), itself composed of D6 and A7, thereby allowing the early genes transcription. Late transcription, and probably also intermediate transcription, require newly synthesized RNA polymerase. The sequence is that of DNA-directed RNA polymerase 132 kDa polypeptide (RPO132) from Oryctolagus cuniculus (Rabbit).